We begin with the raw amino-acid sequence, 231 residues long: UMP-CMP kinase (231 aa).

57-62 (GSGKGT) contributes to the ATP binding site. Residues 77–106 (SAGDLLRREIASGSAYGSVILSTIREGKIV) are NMP. Residues arginine 83, 104 to 106 (KIV), and 131 to 134 (GFPR) contribute to the a ribonucleoside 5'-phosphate site. Asparagine 138 contacts CMP. Residues 169 to 177 (NRNQGRVDD) are LID. Arginine 170 contributes to the ATP binding site. Positions 174 and 185 each coordinate a ribonucleoside 5'-phosphate. Position 213 (glycine 213) interacts with ATP.

The protein belongs to the adenylate kinase family. UMP-CMP kinase subfamily. In terms of assembly, monomer. It depends on Mg(2+) as a cofactor.

It is found in the cytoplasm. It localises to the nucleus. It carries out the reaction CMP + ATP = CDP + ADP. It catalyses the reaction dCMP + ATP = dCDP + ADP. The catalysed reaction is UMP + ATP = UDP + ADP. Its function is as follows. Catalyzes the phosphorylation of pyrimidine nucleoside monophosphates at the expense of ATP. Plays an important role in de novo pyrimidine nucleotide biosynthesis. Has preference for UMP and CMP as phosphate acceptors. This chain is UMP-CMP kinase, found in Prunus armeniaca (Apricot).